Consider the following 355-residue polypeptide: Uroporphyrinogen decarboxylase (355 aa).

Substrate-binding positions include 27-31 (RQAGR), D77, Y154, T209, and H328.

This sequence belongs to the uroporphyrinogen decarboxylase family. Homodimer.

It is found in the cytoplasm. It carries out the reaction uroporphyrinogen III + 4 H(+) = coproporphyrinogen III + 4 CO2. The protein operates within porphyrin-containing compound metabolism; protoporphyrin-IX biosynthesis; coproporphyrinogen-III from 5-aminolevulinate: step 4/4. Its function is as follows. Catalyzes the decarboxylation of four acetate groups of uroporphyrinogen-III to yield coproporphyrinogen-III. The protein is Uroporphyrinogen decarboxylase of Colwellia psychrerythraea (strain 34H / ATCC BAA-681) (Vibrio psychroerythus).